Reading from the N-terminus, the 249-residue chain is uncharacterized protein (249 aa).

Belongs to the ycf73 family.

Its subcellular location is the plastid. It localises to the chloroplast. This is an uncharacterized protein from Oryza sativa (Rice).